The sequence spans 67 residues: Small ribosomal subunit protein bS21 (67 aa).

The protein belongs to the bacterial ribosomal protein bS21 family.

This chain is Small ribosomal subunit protein bS21, found in Magnetococcus marinus (strain ATCC BAA-1437 / JCM 17883 / MC-1).